Consider the following 247-residue polypeptide: Probable cyclic nucleotide phosphodiesterase XBJ1_0953 (247 aa).

Fe cation contacts are provided by aspartate 8, histidine 10, aspartate 52, asparagine 82, histidine 154, histidine 192, and histidine 194. AMP is bound by residues histidine 10, aspartate 52, and 82–83; that span reads NH. Histidine 194 serves as a coordination point for AMP.

Belongs to the cyclic nucleotide phosphodiesterase class-III family. Fe(2+) is required as a cofactor.

The chain is Probable cyclic nucleotide phosphodiesterase XBJ1_0953 from Xenorhabdus bovienii (strain SS-2004) (Xenorhabdus nematophila subsp. bovienii).